Consider the following 573-residue polypeptide: MRAKSILKQFLLPRDKNSSEVGKSDSIELFPNDSLHSLYANWHLPGSHMLPLYNPTNISPYEFHSRFNSDQSYKRSPRLSVTKLLTDRWCELSEYYTIYAGSPQFKVTNAITQGLERHSELEYELHQPIDISLLMETLSGSISDAISHFQATIKDVKDPDLLSELDGNPDAAKLAMEWSDHSINRLFSLITTSEAREVLVHGFLNLENSEFVSSIDELKNSQNGNIDIRKVLVSGIVDHFKIENLEDPTDLSLFREIRDYMDYYFDTTIGDKQVIDLTKFLQSVKQFVEEHKSAFSVKTTDVKTRSVNRLPSSISVLEAAKFQTFYYRKMFGLLSNEHQRTENNHFAYYSLLENARVRGIDVDEPLDIVTLVSILRKNYNLFYLDFVKLANGEPIGFEPFDSYNKGRENTGFALDSVFGIAEKCLLAGKPMQLDLIEKINSLEDFNYDEILSPDLIKNWKTAPTLRYLAARCAQFYELFSELLGDHTAVEYHNGRTSQAFHTSESKYTEDVIGEQTRKASTFWNGKRFPIYTRDLSKCNYCDFKPRCMVPNHQLQGDLYRKSLGAKINEFLHS.

[4Fe-4S] cluster contacts are provided by Cys90, Cys538, Cys541, and Cys547.

The protein belongs to the EXO5 family. Monomer. The cofactor is Mg(2+). [4Fe-4S] cluster is required as a cofactor.

The protein localises to the mitochondrion. Its function is as follows. Single strand DNA specific 5' exonuclease involved in mitochondrial DNA replication and recombination. Releases dinucleotides as main products of catalysis. Has the capacity to slide across 5'double-stranded DNA or 5'RNA sequences and resumes cutting two nucleotides downstream of the double-stranded-to-single-stranded junction or RNA-to-DNA junction, respectively. This is Exonuclease V, mitochondrial (EXO5) from Scheffersomyces stipitis (strain ATCC 58785 / CBS 6054 / NBRC 10063 / NRRL Y-11545) (Yeast).